Reading from the N-terminus, the 327-residue chain is Movement protein (327 aa).

Residues Ser-297–Glu-327 adopt a coiled-coil conformation.

It belongs to the caulimoviridae movement protein family. As to quaternary structure, homotrimer, through the coiled-coil domain. Interacts with VAP. May interact (via N-terminus) with host prenylated Rab acceptor protein 1D (PRA1D).

It is found in the host cell junction. Its subcellular location is the host plasmodesma. Functionally, transports viral genome to neighboring plant cells directly through plasmosdesmata, without any budding. The movement protein allows efficient cell to cell propagation, by bypassing the host cell wall barrier. Acts by forming tubules structures that increase the size exclusion limit (SEL) of plasmodesmata, thereby allowing viral ribonucleocapsids to spread directly to neighboring cells. The protein is Movement protein of Arabidopsis thaliana (Mouse-ear cress).